A 78-amino-acid chain; its full sequence is Large ribosomal subunit protein eL20 (78 aa).

Belongs to the eukaryotic ribosomal protein eL20 family. Part of the 50S ribosomal subunit. Binds 23S rRNA.

This chain is Large ribosomal subunit protein eL20, found in Thermococcus sibiricus (strain DSM 12597 / MM 739).